The primary structure comprises 329 residues: Ornithine carbamoyltransferase (329 aa).

Residues S51 to T54, Q78, R102, and H129 to Q132 contribute to the carbamoyl phosphate site. L-ornithine is bound by residues N174, D238, and S242 to M243. Carbamoyl phosphate-binding positions include C278 to L279 and R306.

The protein belongs to the aspartate/ornithine carbamoyltransferase superfamily. OTCase family.

It localises to the cytoplasm. It carries out the reaction carbamoyl phosphate + L-ornithine = L-citrulline + phosphate + H(+). It functions in the pathway amino-acid biosynthesis; L-arginine biosynthesis; L-arginine from L-ornithine and carbamoyl phosphate: step 1/3. Reversibly catalyzes the transfer of the carbamoyl group from carbamoyl phosphate (CP) to the N(epsilon) atom of ornithine (ORN) to produce L-citrulline. The sequence is that of Ornithine carbamoyltransferase from Helicobacter hepaticus (strain ATCC 51449 / 3B1).